Consider the following 253-residue polypeptide: BRI3-binding protein (253 aa).

The next 4 helical transmembrane spans lie at 19–39 (VLLP…PGAQ), 131–151 (ALVL…TLGF), 164–181 (FWLV…YILH), and 190–210 (AVLP…MGYW). Positions 219–253 (SPSVEEKLEHLENQVRLLNIRLNRVLENLDRSKDK) form a coiled coil. Position 250 is a phosphoserine (Ser250).

As to quaternary structure, interacts with LETMD1. Interacts with BRI3. Interacts with BRI3; the interaction is weak. Interacts with TMEM238L.

It localises to the mitochondrion outer membrane. Functionally, involved in tumorigenesis and may function by stabilizing p53/TP53. The protein is BRI3-binding protein of Mus musculus (Mouse).